We begin with the raw amino-acid sequence, 183 residues long: Large ribosomal subunit protein uL6 (183 aa).

This sequence belongs to the universal ribosomal protein uL6 family. As to quaternary structure, part of the 50S ribosomal subunit.

In terms of biological role, this protein binds to the 23S rRNA, and is important in its secondary structure. It is located near the subunit interface in the base of the L7/L12 stalk, and near the tRNA binding site of the peptidyltransferase center. This is Large ribosomal subunit protein uL6 from Chlamydia trachomatis serovar A (strain ATCC VR-571B / DSM 19440 / HAR-13).